Consider the following 329-residue polypeptide: Mitochondrial glycine transporter (329 aa).

Solcar repeat units lie at residues 19-103 (SKTT…LRQP), 130-214 (LSNW…LKRH), and 232-316 (SSSS…LILR). The next 6 membrane-spanning stretches (helical) occupy residues 25-50 (FAAGLCSGLTSSILLQPADLLKTRVQ), 78-104 (GTLPSALRTGFGSALYFTTLNALRQPL), 136-161 (LGTGAVARVAAGFVMMPVTVIKVRYE), 189-212 (GFGATAARDAPYAGLYVLFYEQLK), 236-262 (INFISGGLAAGLATTITNPFDAVKTRL), and 291-309 (GLGLRITRKALSSALAWTV).

This sequence belongs to the mitochondrial carrier (TC 2.A.29) family. SLC25A38 subfamily.

It localises to the mitochondrion inner membrane. The catalysed reaction is glycine(in) = glycine(out). In terms of biological role, mitochondrial glycine transporter that imports glycine into the mitochondrial matrix. Plays an important role in providing glycine for the first enzymatic step in heme biosynthesis, the condensation of glycine with succinyl-CoA to produce 5-aminolevulinate (ALA) in the mitochondrial matrix. This is Mitochondrial glycine transporter from Aspergillus terreus (strain NIH 2624 / FGSC A1156).